Here is a 76-residue protein sequence, read N- to C-terminus: Small ribosomal subunit protein bS18 (76 aa).

Belongs to the bacterial ribosomal protein bS18 family. As to quaternary structure, part of the 30S ribosomal subunit. Forms a tight heterodimer with protein bS6.

Binds as a heterodimer with protein bS6 to the central domain of the 16S rRNA, where it helps stabilize the platform of the 30S subunit. In Stenotrophomonas maltophilia (strain R551-3), this protein is Small ribosomal subunit protein bS18.